Here is a 140-residue protein sequence, read N- to C-terminus: Large ribosomal subunit protein uL22 (140 aa).

Belongs to the universal ribosomal protein uL22 family. Part of the 50S ribosomal subunit.

This protein binds specifically to 23S rRNA; its binding is stimulated by other ribosomal proteins, e.g. L4, L17, and L20. It is important during the early stages of 50S assembly. It makes multiple contacts with different domains of the 23S rRNA in the assembled 50S subunit and ribosome. Its function is as follows. The globular domain of the protein is located near the polypeptide exit tunnel on the outside of the subunit, while an extended beta-hairpin is found that lines the wall of the exit tunnel in the center of the 70S ribosome. This chain is Large ribosomal subunit protein uL22, found in Parafrankia sp. (strain EAN1pec).